The primary structure comprises 443 residues: Ribulose bisphosphate carboxylase large chain (443 aa).

Substrate is bound by residues asparagine 89 and threonine 139. Lysine 141 (proton acceptor) is an active-site residue. Lysine 143 contacts substrate. Mg(2+)-binding residues include lysine 167, aspartate 169, and glutamate 170. N6-carboxylysine is present on lysine 167. Histidine 260 (proton acceptor) is an active-site residue. Residues arginine 261, histidine 293, and serine 345 each contribute to the substrate site.

Belongs to the RuBisCO large chain family. Type I subfamily. Heterohexadecamer of 8 large chains and 8 small chains; disulfide-linked. The disulfide link is formed within the large subunit homodimers. Requires Mg(2+) as cofactor. In terms of processing, the disulfide bond which can form in the large chain dimeric partners within the hexadecamer appears to be associated with oxidative stress and protein turnover.

The protein resides in the plastid. It is found in the chloroplast. The catalysed reaction is 2 (2R)-3-phosphoglycerate + 2 H(+) = D-ribulose 1,5-bisphosphate + CO2 + H2O. It catalyses the reaction D-ribulose 1,5-bisphosphate + O2 = 2-phosphoglycolate + (2R)-3-phosphoglycerate + 2 H(+). RuBisCO catalyzes two reactions: the carboxylation of D-ribulose 1,5-bisphosphate, the primary event in carbon dioxide fixation, as well as the oxidative fragmentation of the pentose substrate in the photorespiration process. Both reactions occur simultaneously and in competition at the same active site. This is Ribulose bisphosphate carboxylase large chain from Antirrhinum majus (Garden snapdragon).